A 200-amino-acid polypeptide reads, in one-letter code: dITP/XTP pyrophosphatase (200 aa).

7–12 (TQNKRK) is a binding site for substrate. Mg(2+) is bound by residues E42 and D71. D71 (proton acceptor) is an active-site residue. Residues S72, 156-159 (FGYD), K179, and 184-185 (HR) contribute to the substrate site.

It belongs to the HAM1 NTPase family. As to quaternary structure, homodimer. Mg(2+) is required as a cofactor.

The enzyme catalyses XTP + H2O = XMP + diphosphate + H(+). It carries out the reaction dITP + H2O = dIMP + diphosphate + H(+). It catalyses the reaction ITP + H2O = IMP + diphosphate + H(+). Functionally, pyrophosphatase that catalyzes the hydrolysis of nucleoside triphosphates to their monophosphate derivatives, with a high preference for the non-canonical purine nucleotides XTP (xanthosine triphosphate), dITP (deoxyinosine triphosphate) and ITP. Seems to function as a house-cleaning enzyme that removes non-canonical purine nucleotides from the nucleotide pool, thus preventing their incorporation into DNA/RNA and avoiding chromosomal lesions. The protein is dITP/XTP pyrophosphatase of Malacoplasma penetrans (strain HF-2) (Mycoplasma penetrans).